An 833-amino-acid polypeptide reads, in one-letter code: Leucine--tRNA ligase (833 aa).

The 'HIGH' region motif lies at 41 to 52 (PYPSGAGLHVGH). A 'KMSKS' region motif is present at residues 610–614 (KMSKS). An ATP-binding site is contributed by K613.

Belongs to the class-I aminoacyl-tRNA synthetase family.

Its subcellular location is the cytoplasm. It carries out the reaction tRNA(Leu) + L-leucine + ATP = L-leucyl-tRNA(Leu) + AMP + diphosphate. In Streptococcus pyogenes serotype M6 (strain ATCC BAA-946 / MGAS10394), this protein is Leucine--tRNA ligase.